A 186-amino-acid polypeptide reads, in one-letter code: LSM12 homolog B (186 aa).

Residues 1–74 enclose the Sm domain; it reads MSSLAPCFTV…CMDIEIVKEA (74 aa). The AD domain occupies 84–186; that stretch reads EPIDLPMIRE…VVQNFCSKQF (103 aa).

It belongs to the LSM12 family. As to quaternary structure, interacts with Sbat; along with Sbat and Vlet, may form an accessory subcomplex involved in SMN complex function.

Its function is as follows. May have an accessory function in the survival motor neuron (SMN) complex. The polypeptide is LSM12 homolog B (Drosophila melanogaster (Fruit fly)).